Here is a 338-residue protein sequence, read N- to C-terminus: Aspartate carbamoyltransferase catalytic subunit (338 aa).

Carbamoyl phosphate is bound by residues Arg59 and Thr60. Position 87 (Lys87) interacts with L-aspartate. Residues Arg109, His142, and Gln145 each coordinate carbamoyl phosphate. Arg182 and Arg253 together coordinate L-aspartate. Carbamoyl phosphate contacts are provided by Gly294 and Pro295.

It belongs to the aspartate/ornithine carbamoyltransferase superfamily. ATCase family. Heterododecamer (2C3:3R2) of six catalytic PyrB chains organized as two trimers (C3), and six regulatory PyrI chains organized as three dimers (R2).

It carries out the reaction carbamoyl phosphate + L-aspartate = N-carbamoyl-L-aspartate + phosphate + H(+). It functions in the pathway pyrimidine metabolism; UMP biosynthesis via de novo pathway; (S)-dihydroorotate from bicarbonate: step 2/3. Functionally, catalyzes the condensation of carbamoyl phosphate and aspartate to form carbamoyl aspartate and inorganic phosphate, the committed step in the de novo pyrimidine nucleotide biosynthesis pathway. The sequence is that of Aspartate carbamoyltransferase catalytic subunit from Prochlorococcus marinus (strain MIT 9515).